We begin with the raw amino-acid sequence, 503 residues long: MAIQIPSRQLFIDGEWREPVLKKRIPIINPATEQIIGDIPAATAEDVEIAVEAARKALARNKGRDWALAPGAVRAKYLRAIAAKIAERKSEIAKLEAIDCGKPLDEAAWDIDDVSGCFEYYADLAEGLDAQQKTPISLPMEQFKSHVLKEPIGVVGLITPWNYPLLMATWKVAPALAAGCAAILKPSELASVTCLELADVCREVGLPPGVLNILTGLGHEAGAPLASHPHVDKIAFTGSTMTGSKIMTAAAQLVKPVSLELGGKSPIVVFDDVDIDKAAEWTAFGIFWTNGQICSATSRLIIHENIAAKFLDRLVQWCKNIKIADPLEEGCRLGPVVSGGQYEKILKFIATAKSEGARVLSGGARPEHLKKGFFIEPTIITDVTTSMQIWREEVFGPVLCVKTFSSEDEALELANDSHYGLGAAVISKDLERCERVSKALQAGIVWINCSQPCFCQAPWGGNKRSGFGRELGKWGLDNYLTVKQVTEYVSDDPWGWYKSPSKL.

Ile-28, Asp-99, and Leu-189 together coordinate Na(+). 238–245 (GSTMTGSK) contacts NAD(+). Residue Glu-260 is the Proton acceptor of the active site. NAD(+) contacts are provided by Cys-294 and Glu-393. The active-site Nucleophile is Cys-294. Positions 501–503 (SKL) match the Microbody targeting signal motif.

The protein belongs to the aldehyde dehydrogenase family. Expressed in leaves, flowers and fruits.

It is found in the peroxisome. It catalyses the reaction 4-aminobutanal + NAD(+) + H2O = 4-aminobutanoate + NADH + 2 H(+). The catalysed reaction is 3-aminopropanal + NAD(+) + H2O = beta-alanine + NADH + 2 H(+). It participates in amine and polyamine biosynthesis; betaine biosynthesis via choline pathway; betaine from betaine aldehyde: step 1/1. In terms of biological role, dehydrogenase that catalyzes the oxidation of several aminoaldehydes. Metabolizes and detoxifies aldehyde products of polyamine degradation to non-toxic amino acids. Catalyzes the oxidation of 4-aminobutanal and 3-aminopropanal to 4-aminobutanoate and beta-alanine, respectively. The sequence is that of Aminoaldehyde dehydrogenase 2, peroxisomal from Malus domestica (Apple).